A 225-amino-acid polypeptide reads, in one-letter code: Cytidylate kinase (225 aa).

An ATP-binding site is contributed by 11–19 (GPAAAGKST).

It belongs to the cytidylate kinase family. Type 1 subfamily.

It localises to the cytoplasm. The enzyme catalyses CMP + ATP = CDP + ADP. It catalyses the reaction dCMP + ATP = dCDP + ADP. The polypeptide is Cytidylate kinase (Bacillus cereus (strain ATCC 10987 / NRS 248)).